Here is a 560-residue protein sequence, read N- to C-terminus: Putative transport protein VV1438 (560 aa).

A run of 5 helical transmembrane segments spans residues 5-25 (VVLL…AIGL), 37-57 (LGNS…GFSF), 66-86 (FMLF…GIFF), 91-111 (HYFT…YFAS), and 164-184 (VGYA…AKLL). RCK C-terminal domains lie at 203–292 (RGLG…FRNG) and 293–376 (KEVF…RIGF). Helical transmembrane passes span 386–406 (LLAF…TMTF), 409–429 (VSFS…LGFL), 443–463 (ALNM…GLSA), 478–498 (IIGI…LVGA), 506–526 (ALLF…DIVN), and 539–559 (AGTY…LIIL).

It belongs to the AAE transporter (TC 2.A.81) family. YbjL subfamily.

It is found in the cell membrane. The sequence is that of Putative transport protein VV1438 from Vibrio vulnificus (strain YJ016).